Here is a 76-residue protein sequence, read N- to C-terminus: DNA-directed RNA polymerase subunit epsilon (76 aa).

Belongs to the RNA polymerase subunit epsilon family. As to quaternary structure, RNAP is composed of a core of 2 alpha, a beta and a beta' subunit. The core is associated with a delta subunit, and at least one of epsilon or omega. When a sigma factor is associated with the core the holoenzyme is formed, which can initiate transcription.

It catalyses the reaction RNA(n) + a ribonucleoside 5'-triphosphate = RNA(n+1) + diphosphate. Its function is as follows. A non-essential component of RNA polymerase (RNAP). This chain is DNA-directed RNA polymerase subunit epsilon, found in Lactococcus lactis subsp. cremoris (strain MG1363).